Reading from the N-terminus, the 167-residue chain is 3-isopropylmalate dehydratase small subunit (167 aa).

Belongs to the LeuD family. LeuD type 2 subfamily. As to quaternary structure, heterodimer of LeuC and LeuD.

The catalysed reaction is (2R,3S)-3-isopropylmalate = (2S)-2-isopropylmalate. It participates in amino-acid biosynthesis; L-leucine biosynthesis; L-leucine from 3-methyl-2-oxobutanoate: step 2/4. Catalyzes the isomerization between 2-isopropylmalate and 3-isopropylmalate, via the formation of 2-isopropylmaleate. The sequence is that of 3-isopropylmalate dehydratase small subunit from Oleidesulfovibrio alaskensis (strain ATCC BAA-1058 / DSM 17464 / G20) (Desulfovibrio alaskensis).